The chain runs to 30 residues: Bowman-Birk type proteinase inhibitor 4 (30 aa).

Intrachain disulfides connect cysteine 9–cysteine 24 and cysteine 14–cysteine 22.

Functionally, inhibits trypsin (IC(50)=17.60 nM) and, to a lesser extent, alpha-chymotrypsin (IC(50)=2.38 uM). This is Bowman-Birk type proteinase inhibitor 4 from Lathyrus sativus (White vetchling).